Reading from the N-terminus, the 589-residue chain is Early growth response protein 4 (589 aa).

3 disordered regions span residues 29 to 101 (GSAL…HSRR), 383 to 411 (AEGLPGLLTPPSGEGGSSGDGGEFLASTQ), and 436 to 466 (PGSSGVAAPPVPPPPPTPFPQAKARRKGRRG). Over residues 76–86 (PLPPASPPPAR) the composition is skewed to pro residues. Basic residues predominate over residues 92–101 (ARPRAPHSRR). The span at 395-404 (GEGGSSGDGG) shows a compositional bias: gly residues. The span at 444 to 454 (PPVPPPPPTPF) shows a compositional bias: pro residues. 3 C2H2-type zinc fingers span residues 483 to 507 (FACPVESCVRSFARSDELNRHLRIH), 513 to 535 (FQCRICLRNFSRSDHLTTHVRTH), and 541 to 563 (FACDVCGRRFARSDEKKRHSKVH).

Belongs to the EGR C2H2-type zinc-finger protein family.

Its subcellular location is the nucleus. Functionally, transcriptional regulator. Recognizes and binds to the DNA sequence 5'-GCGGGGGCG-3' (GSG). Activates the transcription of target genes whose products are required for mitogenesis and differentiation. This Homo sapiens (Human) protein is Early growth response protein 4 (EGR4).